We begin with the raw amino-acid sequence, 330 residues long: Ketol-acid reductoisomerase (NADP(+)) (330 aa).

Residues 1–181 form the KARI N-terminal Rossmann domain; the sequence is MNVYYEKDAD…GGTKAGVIET (181 aa). NADP(+) contacts are provided by residues 24 to 27, R47, S50, S52, and 82 to 85; these read YGSQ and DQNQ. H107 is an active-site residue. NADP(+) is bound at residue G133. One can recognise a KARI C-terminal knotted domain in the interval 182–327; sequence NFKNETETDL…AKLRNMMSWL (146 aa). Residues D190, E194, E226, and E230 each contribute to the Mg(2+) site. A substrate-binding site is contributed by S251.

This sequence belongs to the ketol-acid reductoisomerase family. It depends on Mg(2+) as a cofactor.

It carries out the reaction (2R)-2,3-dihydroxy-3-methylbutanoate + NADP(+) = (2S)-2-acetolactate + NADPH + H(+). It catalyses the reaction (2R,3R)-2,3-dihydroxy-3-methylpentanoate + NADP(+) = (S)-2-ethyl-2-hydroxy-3-oxobutanoate + NADPH + H(+). Its pathway is amino-acid biosynthesis; L-isoleucine biosynthesis; L-isoleucine from 2-oxobutanoate: step 2/4. It participates in amino-acid biosynthesis; L-valine biosynthesis; L-valine from pyruvate: step 2/4. Its function is as follows. Involved in the biosynthesis of branched-chain amino acids (BCAA). Catalyzes an alkyl-migration followed by a ketol-acid reduction of (S)-2-acetolactate (S2AL) to yield (R)-2,3-dihydroxy-isovalerate. In the isomerase reaction, S2AL is rearranged via a Mg-dependent methyl migration to produce 3-hydroxy-3-methyl-2-ketobutyrate (HMKB). In the reductase reaction, this 2-ketoacid undergoes a metal-dependent reduction by NADPH to yield (R)-2,3-dihydroxy-isovalerate. The chain is Ketol-acid reductoisomerase (NADP(+)) from Chlorobium chlorochromatii (strain CaD3).